A 357-amino-acid polypeptide reads, in one-letter code: Nitronate monooxygenase npaC (357 aa).

FMN is bound by residues Gln167, Gly172, and Gly206.

This sequence belongs to the nitronate monooxygenase family. NMO class I subfamily. FMN serves as cofactor.

In terms of biological role, nitronate monooxygenase; part of the gene cluster that mediates the biosynthesis of the deadly neurotoxic nitroalkane 3-nitropropanoic acid (3-NPA) that acts as an antimetabolite of succinate and irreversibly inhibits succinate dehydrogenase and disrupts mitochondrial oxidative phosphorylation. Catalyzes the oxidation of 3-NPA to nitrite and malonic semialdehyde. NpaC is not conserved in all fungal npa clusters and, while it is possible that it serves as a self-protection mechanism against accumulation of 3-NPA (by npaA and npaB) in the producing host, the more likely scenario may be the three enzymes representing an alternative catabolic pathway of aspartate to generate readily metabolizable nitrogen and carbon sources. This is Nitronate monooxygenase npaC from Metarhizium robertsii (strain ARSEF 23 / ATCC MYA-3075) (Metarhizium anisopliae (strain ARSEF 23)).